Here is a 356-residue protein sequence, read N- to C-terminus: Serine/arginine-rich splicing factor RS41 (356 aa).

RRM domains are found at residues 2 to 74 and 96 to 167; these read KPVF…WTKN and KTLF…YAVK. The interval 73 to 92 is disordered; the sequence is KNDRGGAGRSGGSRRSSSGL. The span at 168 to 186 shows a compositional bias: basic and acidic residues; sequence DDDSRGNGYSPERRRDRSP. The tract at residues 168 to 356 is disordered; that stretch reads DDDSRGNGYS…SPSRSPPAEE (189 aa). A phosphoserine mark is found at S192, S194, S210, S239, S254, and S274. The segment covering 238–253 has biased composition (basic and acidic residues); that stretch reads LSPDYKRDDRRRERVA. 3 consecutive repeat copies span residues 267-278, 279-290, and 291-302. Positions 267–307 are 4 X 12 AA tandem repeats of [KE]-[GK]-R -[GR]-E-S-R-S-P-P-P-Y; it reads KGRGESRSPPPYEKRRESRSPPPYEKRRESRSPPPYEKRRE. Residues 268–306 are compositionally biased toward basic and acidic residues; it reads GRGESRSPPPYEKRRESRSPPPYEKRRESRSPPPYEKRR. One copy of the 4; truncated repeat lies at 303 to 307; it reads EKRRE. Phosphoserine is present on residues S309, S324, S342, S347, and S351.

It belongs to the splicing factor SR family. RS subfamily. In terms of assembly, component of the spliceosome. Interacts with RCF3 and CPL1. Interacts with DRB1/HYL1 and SE. Leaves, stem, roots and flowers.

It is found in the nucleus. The protein resides in the nucleus speckle. Functionally, required for constitutive and alternative pre-mRNA splicing. Involved in primary miRNA processing and pri-miRNA biogenesis. Binds both intronless and intron-containing pri-miRNAs. This is Serine/arginine-rich splicing factor RS41 (RS41) from Arabidopsis thaliana (Mouse-ear cress).